Reading from the N-terminus, the 249-residue chain is tRNA (guanine-N(1)-)-methyltransferase (249 aa).

S-adenosyl-L-methionine is bound by residues G112 and 132–137 (LGDFVL).

This sequence belongs to the RNA methyltransferase TrmD family. In terms of assembly, homodimer.

The protein localises to the cytoplasm. It carries out the reaction guanosine(37) in tRNA + S-adenosyl-L-methionine = N(1)-methylguanosine(37) in tRNA + S-adenosyl-L-homocysteine + H(+). Its function is as follows. Specifically methylates guanosine-37 in various tRNAs. This chain is tRNA (guanine-N(1)-)-methyltransferase, found in Citrifermentans bemidjiense (strain ATCC BAA-1014 / DSM 16622 / JCM 12645 / Bem) (Geobacter bemidjiensis).